A 391-amino-acid polypeptide reads, in one-letter code: Nucleosome assembly protein 1-like 1 (391 aa).

Basic and acidic residues predominate over residues 1–10 (MADIDNKEQS). A disordered region spans residues 1 to 32 (MADIDNKEQSELDQDLDDVEEVEEEETGEETK). The residue at position 2 (alanine 2) is an N-acetylalanine. Phosphoserine is present on serine 10. A compositionally biased stretch (acidic residues) spans 11–28 (ELDQDLDDVEEVEEEETG). Threonine 62 and threonine 64 each carry phosphothreonine. Residue serine 69 is modified to Phosphoserine. Position 116 is an N6-acetyllysine (lysine 116). The NAP1L motif motif lies at 125-150 (YEPTEEECEWKPDEEDEISEELKEKA). A compositionally biased stretch (acidic residues) spans 132-143 (CEWKPDEEDEIS). The disordered stretch occupies residues 132–163 (CEWKPDEEDEISEELKEKAKVEDEKKDEEKED). Serine 143 carries the phosphoserine modification. Positions 144–163 (EELKEKAKVEDEKKDEEKED) are enriched in basic and acidic residues. Positions 273-279 (IKKKQKH) match the Nuclear localization signal motif. The tract at residues 345–391 (EAIEDDDDDYDEEGEEADEEGEEEGDEENDPDYDPKKDQNPAECKQQ) is disordered. A compositionally biased stretch (acidic residues) spans 346 to 376 (AIEDDDDDYDEEGEEADEEGEEEGDEENDPD). Residues glutamate 359 and glutamate 360 each carry the 5-glutamyl polyglycine modification. The segment covering 377–391 (YDPKKDQNPAECKQQ) has biased composition (basic and acidic residues). Cysteine methyl ester is present on cysteine 388. Cysteine 388 carries S-farnesyl cysteine lipidation. A propeptide spans 389 to 391 (KQQ) (removed in mature form).

The protein belongs to the nucleosome assembly protein (NAP) family. Homodimer. The dimer binds strongly and sequentially to single and double H2A-H2B heterodimers. Interacts with ERCC6; this interaction increases ERCC6 processivity. Interacts with RAD54. Interacts with SETD1A. Polyglycylated by TTLL10 on glutamate residues, resulting in polyglycine chains on the gamma-carboxyl group. Both polyglutamylation and polyglycylation modifications can coexist on the same protein on adjacent residues, and lowering polyglycylation levels increases polyglutamylation, and reciprocally. In terms of processing, polyglutamylated by TTLL4 on glutamate residues, resulting in polyglutamate chains on the gamma-carboxyl group. Both polyglutamylation and polyglycylation modifications can coexist on the same protein on adjacent residues, and lowering polyglycylation levels increases polyglutamylation, and reciprocally.

The protein resides in the nucleus. The protein localises to the melanosome. It localises to the cytoplasm. Histone chaperone that plays a role in the nuclear import of H2A-H2B and nucleosome assembly. Also participates in several important DNA repair mechanisms: greatly enhances ERCC6-mediated chromatin remodeling which is essential for transcription-coupled nucleotide excision DNA repair. Also stimulates homologous recombination (HR) by RAD51 and RAD54 which is essential in mitotic DNA double strand break (DSB) repair. Plays a key role in the regulation of embryonic neurogenesis. Promotes the proliferation of neural progenitors and inhibits neuronal differentiation during cortical development. Regulates neurogenesis via the modulation of RASSF10; regulates RASSF10 expression by promoting SETD1A-mediated H3K4 methylation at the RASSF10 promoter. In Bos taurus (Bovine), this protein is Nucleosome assembly protein 1-like 1 (NAP1L1).